We begin with the raw amino-acid sequence, 334 residues long: Ketol-acid reductoisomerase (NADP(+)) (334 aa).

Residues 3-183 (ATIYYENDAD…GGTRGGVIET (181 aa)) form the KARI N-terminal Rossmann domain. NADP(+) contacts are provided by residues 26 to 29 (YGSQ), Arg49, Ser52, and 84 to 87 (DEVQ). His109 is an active-site residue. Gly135 is an NADP(+) binding site. Residues 184 to 329 (TFAEETETDL…LGLRRMMNWI (146 aa)) enclose the KARI C-terminal knotted domain. Positions 192, 196, 228, and 232 each coordinate Mg(2+). Ser253 serves as a coordination point for substrate.

The protein belongs to the ketol-acid reductoisomerase family. The cofactor is Mg(2+).

It carries out the reaction (2R)-2,3-dihydroxy-3-methylbutanoate + NADP(+) = (2S)-2-acetolactate + NADPH + H(+). The enzyme catalyses (2R,3R)-2,3-dihydroxy-3-methylpentanoate + NADP(+) = (S)-2-ethyl-2-hydroxy-3-oxobutanoate + NADPH + H(+). It participates in amino-acid biosynthesis; L-isoleucine biosynthesis; L-isoleucine from 2-oxobutanoate: step 2/4. The protein operates within amino-acid biosynthesis; L-valine biosynthesis; L-valine from pyruvate: step 2/4. Involved in the biosynthesis of branched-chain amino acids (BCAA). Catalyzes an alkyl-migration followed by a ketol-acid reduction of (S)-2-acetolactate (S2AL) to yield (R)-2,3-dihydroxy-isovalerate. In the isomerase reaction, S2AL is rearranged via a Mg-dependent methyl migration to produce 3-hydroxy-3-methyl-2-ketobutyrate (HMKB). In the reductase reaction, this 2-ketoacid undergoes a metal-dependent reduction by NADPH to yield (R)-2,3-dihydroxy-isovalerate. This chain is Ketol-acid reductoisomerase (NADP(+)), found in Rhodopirellula baltica (strain DSM 10527 / NCIMB 13988 / SH1).